The primary structure comprises 230 residues: Large ribosomal subunit protein uL1 (230 aa).

Belongs to the universal ribosomal protein uL1 family. Part of the 50S ribosomal subunit.

In terms of biological role, binds directly to 23S rRNA. The L1 stalk is quite mobile in the ribosome, and is involved in E site tRNA release. Functionally, protein L1 is also a translational repressor protein, it controls the translation of the L11 operon by binding to its mRNA. In Acholeplasma laidlawii (strain PG-8A), this protein is Large ribosomal subunit protein uL1.